The sequence spans 289 residues: UTP--glucose-1-phosphate uridylyltransferase 2 (289 aa).

This sequence belongs to the UDPGP type 2 family.

It carries out the reaction alpha-D-glucose 1-phosphate + UTP + H(+) = UDP-alpha-D-glucose + diphosphate. Its pathway is glycolipid metabolism; diglucosyl-diacylglycerol biosynthesis. Catalyzes the formation of UDP-glucose from glucose-1-phosphate and UTP. This is an intermediate step in the biosynthesis of diglucosyl-diacylglycerol (Glc2-DAG), i.e. a glycolipid found in the membrane, which is also used as a membrane anchor for lipoteichoic acid (LTA). In Staphylococcus saprophyticus subsp. saprophyticus (strain ATCC 15305 / DSM 20229 / NCIMB 8711 / NCTC 7292 / S-41), this protein is UTP--glucose-1-phosphate uridylyltransferase 2 (gtaB2).